A 276-amino-acid chain; its full sequence is 3-methyl-2-oxobutanoate hydroxymethyltransferase (276 aa).

Mg(2+)-binding residues include D46 and D85. 3-methyl-2-oxobutanoate-binding positions include 46–47 (DS), D85, and K115. E117 contributes to the Mg(2+) binding site. E184 functions as the Proton acceptor in the catalytic mechanism.

The protein belongs to the PanB family. As to quaternary structure, homodecamer; pentamer of dimers. Mg(2+) serves as cofactor.

Its subcellular location is the cytoplasm. It carries out the reaction 3-methyl-2-oxobutanoate + (6R)-5,10-methylene-5,6,7,8-tetrahydrofolate + H2O = 2-dehydropantoate + (6S)-5,6,7,8-tetrahydrofolate. It functions in the pathway cofactor biosynthesis; (R)-pantothenate biosynthesis; (R)-pantoate from 3-methyl-2-oxobutanoate: step 1/2. Its function is as follows. Catalyzes the reversible reaction in which hydroxymethyl group from 5,10-methylenetetrahydrofolate is transferred onto alpha-ketoisovalerate to form ketopantoate. The polypeptide is 3-methyl-2-oxobutanoate hydroxymethyltransferase (Heliobacterium modesticaldum (strain ATCC 51547 / Ice1)).